Reading from the N-terminus, the 434-residue chain is T-box transcription factor T homolog (434 aa).

A DNA-binding region (T-box) is located at residues 50-220 (LWKKFHKLTN…YNPFAKAFLD (171 aa)). Composition is skewed to polar residues over residues 355-364 (SGFSHVSSPQ) and 376-385 (HPTSSHQHNL). Residues 355-385 (SGFSHVSSPQSPLPTGLFRNPHPTSSHQHNL) are disordered.

In the developing embryo, expressed in the mesenchyme founder cells, vegetal plate of the mesenchyme blastula, extending tip of the invaginating archenteron and, later, in the secondary mesenchyme cells.

The protein resides in the nucleus. Involved in the transcriptional regulation of genes required for mesoderm differentiation. The sequence is that of T-box transcription factor T homolog from Hemicentrotus pulcherrimus (Sea urchin).